A 124-amino-acid chain; its full sequence is MAISKEDILEAVGSMTVMELNDLVKAFEEKFGVSAASMAVAAPGAGAAAAPVEEKTEFDVILLAAGEKKVEAIKVVRAATGLGLKEAKDLVDGAPKAVKEGISKADAEAIKKQLEDAGAKVEIK.

This sequence belongs to the bacterial ribosomal protein bL12 family. In terms of assembly, homodimer. Part of the ribosomal stalk of the 50S ribosomal subunit. Forms a multimeric L10(L12)X complex, where L10 forms an elongated spine to which 2 to 4 L12 dimers bind in a sequential fashion. Binds GTP-bound translation factors.

In terms of biological role, forms part of the ribosomal stalk which helps the ribosome interact with GTP-bound translation factors. Is thus essential for accurate translation. In Aromatoleum aromaticum (strain DSM 19018 / LMG 30748 / EbN1) (Azoarcus sp. (strain EbN1)), this protein is Large ribosomal subunit protein bL12.